A 404-amino-acid chain; its full sequence is Calcium/calmodulin-dependent protein kinase cmkB (404 aa).

A Protein kinase domain is found at 18–279; that stretch reads YKTGKTLGAG…AHQALQHPWI (262 aa). Residues 24-32 and lysine 47 each bind ATP; that span reads LGAGLYSVV. Aspartate 141 serves as the catalytic Proton acceptor. Threonine 179 bears the Phosphothreonine; by cmkC mark. The autoinhibitory domain stretch occupies residues 279-322; sequence INPPYDTTDDLGSGEDLLPNIKKNFNARRTLHKAIDTVRAINKL. The tract at residues 301 to 323 is calmodulin-binding; that stretch reads KNFNARRTLHKAIDTVRAINKLR. Residues 336–404 form a disordered region; that stretch reads VDPKPEHVNG…WSRTAPRSER (69 aa). 2 stretches are compositionally biased toward basic and acidic residues: residues 338 to 370 and 379 to 389; these read PKPEHVNGSEVVEDRTTPRERENEDAMEIDSRS and QIREQERKVKE.

The protein belongs to the protein kinase superfamily. CAMK Ser/Thr protein kinase family. CaMK subfamily. Phosphorylated by cmkC on Thr-179.

It carries out the reaction L-seryl-[protein] + ATP = O-phospho-L-seryl-[protein] + ADP + H(+). The catalysed reaction is L-threonyl-[protein] + ATP = O-phospho-L-threonyl-[protein] + ADP + H(+). Activated by Ca(2+)/calmodulin. Binding of calmodulin results in conformational change that relieves intrasteric autoinhibition and allows phosphorylation of Thr-179 within the activation loop by cmkC. In terms of biological role, calcium/calmodulin-dependent protein kinase that operates in the calcium-triggered CaMKK-CaMK1 signaling cascade. Required in G1-phase of the cell cycle for proper timing of the initial nuclear division after germination, but not for subsequent mitoses. Required for the normal temporal regulation of nimX activity. This chain is Calcium/calmodulin-dependent protein kinase cmkB, found in Emericella nidulans (Aspergillus nidulans).